The primary structure comprises 299 residues: Tyrosine recombinase XerC (299 aa).

The Core-binding (CB) domain occupies 1–86 (MRNELLDFLE…AIRSLFKFLT (86 aa)). A Tyr recombinase domain is found at 107–293 (KLPEFLSIEE…NQARMTEVYN (187 aa)). Catalysis depends on residues R146, K170, H245, R248, and H271. The O-(3'-phospho-DNA)-tyrosine intermediate role is filled by Y280.

It belongs to the 'phage' integrase family. XerC subfamily. As to quaternary structure, forms a cyclic heterotetrameric complex composed of two molecules of XerC and two molecules of XerD.

It is found in the cytoplasm. Site-specific tyrosine recombinase, which acts by catalyzing the cutting and rejoining of the recombining DNA molecules. The XerC-XerD complex is essential to convert dimers of the bacterial chromosome into monomers to permit their segregation at cell division. It also contributes to the segregational stability of plasmids. This is Tyrosine recombinase XerC from Natranaerobius thermophilus (strain ATCC BAA-1301 / DSM 18059 / JW/NM-WN-LF).